Consider the following 333-residue polypeptide: Fructose-1,6-bisphosphatase class 1 (333 aa).

Residues glutamate 89, aspartate 110, leucine 112, and aspartate 113 each contribute to the Mg(2+) site. Substrate-binding positions include aspartate 113–serine 116, asparagine 206, tyrosine 239, tyrosine 257–tyrosine 259, and lysine 269. Residue glutamate 275 participates in Mg(2+) binding.

The protein belongs to the FBPase class 1 family. As to quaternary structure, homotetramer. Mg(2+) is required as a cofactor.

The protein resides in the cytoplasm. The enzyme catalyses beta-D-fructose 1,6-bisphosphate + H2O = beta-D-fructose 6-phosphate + phosphate. Its pathway is carbohydrate biosynthesis; gluconeogenesis. This is Fructose-1,6-bisphosphatase class 1 from Sodalis glossinidius (strain morsitans).